The primary structure comprises 1323 residues: Phosphoribosylformylglycinamidine synthase (1323 aa).

Residues 312–323 (GAATGSGGEIRD), 391–393 (NGY), and A691 contribute to the ATP site. Mg(2+)-binding residues include D692, E733, N737, and D903. Position 905 (S905) interacts with ATP. Residues 1062–1306 (VAILREQGVN…YPHSKASEWG (245 aa)) enclose the Glutamine amidotransferase type-1 domain. C1156 acts as the Nucleophile in catalysis. Active-site residues include H1284 and E1286.

In the N-terminal section; belongs to the FGAMS family.

It is found in the cytoplasm. It carries out the reaction N(2)-formyl-N(1)-(5-phospho-beta-D-ribosyl)glycinamide + L-glutamine + ATP + H2O = 2-formamido-N(1)-(5-O-phospho-beta-D-ribosyl)acetamidine + L-glutamate + ADP + phosphate + H(+). Its pathway is purine metabolism; IMP biosynthesis via de novo pathway; 5-amino-1-(5-phospho-D-ribosyl)imidazole from N(2)-formyl-N(1)-(5-phospho-D-ribosyl)glycinamide: step 1/2. Phosphoribosylformylglycinamidine synthase involved in the purines biosynthetic pathway. Catalyzes the ATP-dependent conversion of formylglycinamide ribonucleotide (FGAR) and glutamine to yield formylglycinamidine ribonucleotide (FGAM) and glutamate. The protein is Phosphoribosylformylglycinamidine synthase (ade3) of Schizosaccharomyces pombe (strain 972 / ATCC 24843) (Fission yeast).